The chain runs to 493 residues: Cytochrome P450 710A4 (493 aa).

Residues 5 to 25 form a helical membrane-spanning segment; that stretch reads VSLFASLTPYLVSALLLFLLL. Cys435 contacts heme.

This sequence belongs to the cytochrome P450 family. Heme serves as cofactor. As to expression, very weak expression in roots and root hairs. Not detected in the root tips.

The protein localises to the membrane. It catalyses the reaction 5-dehydroepisterol + NADPH + O2 + H(+) = ergosta-5,7,22,24(28)-tetraen-3beta-ol + NADP(+) + 2 H2O. It participates in steroid biosynthesis; sterol biosynthesis. Required to form the C-22 double bond in the sterol side chain. Possesses C-22 desaturase activity toward beta-sitosterol and produces stigmasterol. This Arabidopsis thaliana (Mouse-ear cress) protein is Cytochrome P450 710A4.